The following is an 86-amino-acid chain: Small ribosomal subunit protein uS15 (86 aa).

The disordered stretch occupies residues 1 to 22; it reads MSVDTQKVIEDNKRSAQDTGSP. Basic and acidic residues predominate over residues 7 to 16; that stretch reads KVIEDNKRSA.

This sequence belongs to the universal ribosomal protein uS15 family. Part of the 30S ribosomal subunit. Forms a bridge to the 50S subunit in the 70S ribosome, contacting the 23S rRNA.

Functionally, one of the primary rRNA binding proteins, it binds directly to 16S rRNA where it helps nucleate assembly of the platform of the 30S subunit by binding and bridging several RNA helices of the 16S rRNA. Forms an intersubunit bridge (bridge B4) with the 23S rRNA of the 50S subunit in the ribosome. The sequence is that of Small ribosomal subunit protein uS15 from Xanthomonas axonopodis pv. citri (strain 306).